Reading from the N-terminus, the 240-residue chain is MESPRIGVVRDSMLHRPLLIKPTLGKSKSRGLSYPGPEFVFGTATTVQDGGVQEAISNWHTHTMSTTHRAAERDFIALNREGVKSGLVTAKELHQYRATHDIRRKPLTREGFRRSAPPRLSPDDSFFVSNRPSTPISELIEYKYAQRWLEEQQVRDRVLQAHQHKKAQLGRIQDTRTTLLRKSQPLPEAPSTWKLPRFQKVGAALDTFRDPEARKKAMNAHCSESVSRRGILGQGTYTVD.

The protein belongs to the CFAP77 family.

It is found in the cytoplasm. It localises to the cytoskeleton. The protein localises to the cilium axoneme. The protein resides in the flagellum axoneme. In terms of biological role, microtubule inner protein (MIP) part of the dynein-decorated doublet microtubules (DMTs) in cilia axoneme, which is required for motile cilia beating. In Danio rerio (Zebrafish), this protein is Cilia- and flagella-associated protein 77.